We begin with the raw amino-acid sequence, 108 residues long: Tubulin-specific chaperone A (108 aa).

Ala2 bears the N-acetylalanine mark.

It belongs to the TBCA family. As to quaternary structure, supercomplex made of cofactors A to E. Cofactors A and D function by capturing and stabilizing tubulin in a quasi-native conformation. Cofactor E binds to the cofactor D-tubulin complex; interaction with cofactor C then causes the release of tubulin polypeptides that are committed to the native state.

It is found in the cytoplasm. The protein resides in the cytoskeleton. Its function is as follows. Tubulin-folding protein; involved in the early step of the tubulin folding pathway. This is Tubulin-specific chaperone A (TBCA) from Gallus gallus (Chicken).